Here is a 263-residue protein sequence, read N- to C-terminus: 3-methyl-2-oxobutanoate hydroxymethyltransferase (263 aa).

Residues aspartate 46 and aspartate 85 each contribute to the Mg(2+) site. 3-methyl-2-oxobutanoate contacts are provided by residues 46–47, aspartate 85, and lysine 115; that span reads DS. Residue glutamate 117 coordinates Mg(2+). The active-site Proton acceptor is the glutamate 180.

The protein belongs to the PanB family. As to quaternary structure, homodecamer; pentamer of dimers. Mg(2+) is required as a cofactor.

It is found in the cytoplasm. The catalysed reaction is 3-methyl-2-oxobutanoate + (6R)-5,10-methylene-5,6,7,8-tetrahydrofolate + H2O = 2-dehydropantoate + (6S)-5,6,7,8-tetrahydrofolate. Its pathway is cofactor biosynthesis; (R)-pantothenate biosynthesis; (R)-pantoate from 3-methyl-2-oxobutanoate: step 1/2. Its function is as follows. Catalyzes the reversible reaction in which hydroxymethyl group from 5,10-methylenetetrahydrofolate is transferred onto alpha-ketoisovalerate to form ketopantoate. In Corynebacterium diphtheriae (strain ATCC 700971 / NCTC 13129 / Biotype gravis), this protein is 3-methyl-2-oxobutanoate hydroxymethyltransferase.